The primary structure comprises 132 residues: Small ribosomal subunit protein uS8 (132 aa).

It belongs to the universal ribosomal protein uS8 family. Part of the 30S ribosomal subunit. Contacts proteins S5 and S12.

One of the primary rRNA binding proteins, it binds directly to 16S rRNA central domain where it helps coordinate assembly of the platform of the 30S subunit. The chain is Small ribosomal subunit protein uS8 from Corynebacterium efficiens (strain DSM 44549 / YS-314 / AJ 12310 / JCM 11189 / NBRC 100395).